The chain runs to 225 residues: UPF0758 protein BAMEG_4721 (225 aa).

One can recognise an MPN domain in the interval 103 to 225 (SIRSPEDCAT…FVSLKEKGHI (123 aa)). Residues His-174, His-176, and Asp-187 each coordinate Zn(2+). Positions 174 to 187 (HNHPSGDPAPSRED) match the JAMM motif motif.

It belongs to the UPF0758 family.

In Bacillus anthracis (strain CDC 684 / NRRL 3495), this protein is UPF0758 protein BAMEG_4721.